Here is a 739-residue protein sequence, read N- to C-terminus: MPGKMVVILGASNILWIMFAASQAFKIETTPESRYLAQIGDSVSLTCSTTGCESPFFSWRTQIDSPLNGKVTNEGTTSTLTMNPVSFGNEHSYLCTATCESRKLEKGIQVEIYSFPKDPEIHLSGPLEAGKPITVKCSVADVYPFDRLEIDLLKGDHLMKSQEFLEDADRKSLETKSLEVTFTPVIEDIGKVLVCRAKLHIDEMDSVPTVRQAVKELQVYISPKNTVISVNPSTKLQEGGSVTMTCSSEGLPAPEIFWSKKLDNGNLQHLSGNATLTLIAMRMEDSGIYVCEGVNLIGKNRKEVELIVQEKPFTVEISPGPRIAAQIGDSVMLTCSVMGCESPSFSWRTQIDSPLSGKVRSEGTNSTLTLSPVSFENEHSYLCTVTCGHKKLEKGIQVELYSFPRDPEIEMSGGLVNGSSVTVSCKVPSVYPLDRLEIELLKGETILENIEFLEDTDMKSLENKSLEMTFIPTIEDTGKALVCQAKLHIDDMEFEPKQRQSTQTLYVNVAPRDTTVLVSPSSILEEGSSVNMTCLSQGFPAPKILWSRQLPNGELQPLSENATLTLISTKMEDSGVYLCEGINQAGRSRKEVELIIQVTPKDIKLTAFPSESVKEGDTVIISCTCGNVPETWIILKKKAETGDTVLKSIDGAYTIRKAQLKDAGVYECESKNKVGSQLRSLTLDVQGRENNKDYFSPELLVLYFASSLIIPAIGMIIYFARKANMKGSYSLVEAQKSKV.

A signal peptide spans 1-24; sequence MPGKMVVILGASNILWIMFAASQA. Ig-like C2-type domains lie at 25–105, 109–212, 223–309, 312–399, 408–506, 511–595, and 600–684; these read FKIE…RKLE, QVEI…TVRQ, PKNT…LIVQ, PFTV…IQVE, EIEM…QTLY, PRDT…VELI, and PKDI…LTLD. Over 25 to 698 the chain is Extracellular; the sequence is FKIETTPESR…ENNKDYFSPE (674 aa). 5 disulfide bridges follow: Cys-47/Cys-95, Cys-52/Cys-99, Cys-137/Cys-195, Cys-246/Cys-291, and Cys-335/Cys-383. Asn-273, Asn-365, Asn-417, Asn-463, Asn-531, and Asn-561 each carry an N-linked (GlcNAc...) asparagine glycan. Cys-534 and Cys-579 are disulfide-bonded. The chain crosses the membrane as a helical span at residues 699–720; the sequence is LLVLYFASSLIIPAIGMIIYFA. At 721 to 739 the chain is on the cytoplasmic side; it reads RKANMKGSYSLVEAQKSKV.

In terms of processing, cleaved by the metalloproteinase ADAM17 to generate the soluble form. Sialoglycoprotein. Post-translationally, ubiquitinated by TRIM65 via 'Lys-48'-linked ubiquitination; leading to proteasomal degradation. Expressed on inflamed vascular endothelium, as well as on macrophage-like and dendritic cell types in both normal and inflamed tissue.

The protein localises to the cell membrane. It localises to the secreted. Cell adhesion glycoprotein predominantly expressed on the surface of endothelial cells that plays an important role in immune surveillance and inflammation. Acts as a major regulator of leukocyte adhesion to the endothelium through interaction with different types of integrins. During inflammatory responses, binds ligands on the surface of activated endothelial cells to initiate the activation of calcium channels and the plasma membrane-associated small GTPase RAC1 leading to leukocyte transendothelial migration. Also serves as a quality-control checkpoint for entry into bone marrow by providing a 'don't-eat-me' stamping in the context of major histocompatibility complex (MHC) class-I presentation. This chain is Vascular cell adhesion protein 1 (VCAM1), found in Homo sapiens (Human).